A 292-amino-acid polypeptide reads, in one-letter code: Homoserine kinase (292 aa).

84–94 (PLARGMGSSSA) serves as a coordination point for ATP.

This sequence belongs to the GHMP kinase family. Homoserine kinase subfamily.

It localises to the cytoplasm. The catalysed reaction is L-homoserine + ATP = O-phospho-L-homoserine + ADP + H(+). Its pathway is amino-acid biosynthesis; L-threonine biosynthesis; L-threonine from L-aspartate: step 4/5. Its function is as follows. Catalyzes the ATP-dependent phosphorylation of L-homoserine to L-homoserine phosphate. The polypeptide is Homoserine kinase (Thermus thermophilus (strain ATCC 27634 / DSM 579 / HB8)).